The following is a 268-amino-acid chain: MKNNEYKYGGVLMTKPYYNKNKMILVHSDTFKFLSKMKPESMDMIFADPPYFLSNGGISNSGGQVVSVDKGDWDKISSFEEKHEFNRKWIRLAKEVLKPNGTVWISGSLHNIYSVGMALEQEGFKILNNITWQKTNPAPNLSCRYFTHSTETILWARKNDKKARHYYNYDLMKELNDGKQMKDVWTGSLTKKVEKWAGKHPTQKPEYLLERIILASTKEGDYILDPFVGSGTTGVVAKRLGRRFIGIDAEKEYLKIARKRLEAENETN.

It belongs to the N(4)/N(6)-methyltransferase family. Homodimer.

It carries out the reaction a 2'-deoxyadenosine in DNA + S-adenosyl-L-methionine = an N(6)-methyl-2'-deoxyadenosine in DNA + S-adenosyl-L-homocysteine + H(+). Functionally, a beta subtype methylase that recognizes the single- or double-stranded sequence 5'-GATC-3', methylates A-2 on one or both strands (respectively), and protects the DNA from cleavage by the DpnII endonuclease. Further methylates DNA that is already methylated at 5'-GATC-3' sites. Essential for establishment of a previously unmethylated plasmid transformed into the cell as single-stranded DNA, enhances plasmid transfer to DpnII-containing strains of Streptococcus pneumoniae. This chain is Type II methyltransferase M2.DpnII, found in Streptococcus pneumoniae.